The sequence spans 340 residues: Cytochrome c peroxidase, mitochondrial (340 aa).

The transit peptide at 1–17 (MRSFRAVRNFSTTAKRL) directs the protein to the mitochondrion. The Proton acceptor role is filled by His-101. The segment at 175–198 (WKRGRVDEPESASPPDGSLPDASQ) is disordered. His-224 is a heme b binding site. Trp-240 acts as the Tryptophan radical intermediate in catalysis.

The protein belongs to the peroxidase family. Cytochrome c peroxidase subfamily. In terms of assembly, forms a one-to-one complex with cytochrome c. It depends on heme b as a cofactor.

It is found in the mitochondrion matrix. Its subcellular location is the mitochondrion intermembrane space. It carries out the reaction 2 Fe(II)-[cytochrome c] + H2O2 + 2 H(+) = 2 Fe(III)-[cytochrome c] + 2 H2O. Its function is as follows. Destroys radicals which are normally produced within the cells and which are toxic to biological systems. The sequence is that of Cytochrome c peroxidase, mitochondrial (CCP1) from Yarrowia lipolytica (strain CLIB 122 / E 150) (Yeast).